Consider the following 84-residue polypeptide: U4-theraphotoxin-Hhn1a (84 aa).

Residues 1–22 (MKVTLIAILTCAAVLVLHTTAA) form the signal peptide. Positions 23 to 47 (EELEESQLMEVGMPDTELAAVDEER) are excised as a propeptide. 3 disulfide bridges follow: cysteine 51–cysteine 65, cysteine 55–cysteine 76, and cysteine 70–cysteine 81.

The protein belongs to the neurotoxin 12 (Hwtx-2) family. 02 (Hwtx-2) subfamily. As to expression, expressed by the venom gland.

Its subcellular location is the secreted. In terms of biological role, postsynaptic neurotoxin. This chain is U4-theraphotoxin-Hhn1a, found in Cyriopagopus hainanus (Chinese bird spider).